We begin with the raw amino-acid sequence, 505 residues long: One cut domain family member 2 (505 aa).

Disordered stretches follow at residues 29 to 94 (LGTL…GTAA), 165 to 190 (KFHH…RLSG), and 275 to 333 (EQHL…QLEE). Gly residues predominate over residues 35 to 56 (PVGGGSGGGGGGGGGGGGGGPG). Basic residues predominate over residues 167 to 187 (HHPHPHHHPHHHHHHHHHHQR). A DNA-binding region (CUT) is located at residues 325–411 (VATSGQLEEI…QRMSALRLAA (87 aa)). A DNA-binding region (homeobox) is located at residues 427 to 486 (QKKSRLVFTDLQRRTLFAIFKENKRPSKEMQITISQQLGLELTTVSNFFMNARRRSLEKW).

The protein belongs to the CUT homeobox family.

The protein resides in the nucleus. Transcriptional activator. Activates the transcription of a number of liver genes such as HNF3B. This chain is One cut domain family member 2 (Onecut2), found in Mus musculus (Mouse).